A 532-amino-acid polypeptide reads, in one-letter code: Putative sodium-dependent excitatory amino acid transporter glt-3 (532 aa).

Topologically, residues 1 to 5 (MGMKK) are cytoplasmic. 3 consecutive transmembrane segments (helical) span residues 6-26 (DLLL…GFVI), 46-66 (FMQI…ISAL), and 83-103 (IYYM…VSSI). The Extracellular portion of the chain corresponds to 104-181 (HPGDPELIHE…SEVLHKQTLT (78 aa)). N-linked (GlcNAc...) asparagine glycosylation is found at asparagine 164 and asparagine 169. Helical transmembrane passes span 182–202 (YTNE…GIIL), 222–242 (IIMR…LSLV), 264–284 (VTVI…LYFL), 352–372 (AVAV…MDLV), and 383–402 (IGSG…LTTV).

The protein belongs to the dicarboxylate/amino acid:cation symporter (DAACS) (TC 2.A.23) family.

It localises to the membrane. The protein is Putative sodium-dependent excitatory amino acid transporter glt-3 (glt-3) of Caenorhabditis elegans.